The sequence spans 92 residues: Small ribosomal subunit protein uS19 (92 aa).

This sequence belongs to the universal ribosomal protein uS19 family.

Functionally, protein S19 forms a complex with S13 that binds strongly to the 16S ribosomal RNA. The sequence is that of Small ribosomal subunit protein uS19 from Limosilactobacillus reuteri (strain DSM 20016) (Lactobacillus reuteri).